The following is a 308-amino-acid chain: Cyclin-D2-1 (308 aa).

Positions 286–308 are disordered; the sequence is EGLSYDSSSPPPPKRRKRSPPGT. A compositionally biased stretch (basic residues) spans 298-308; sequence PKRRKRSPPGT.

This sequence belongs to the cyclin family. Cyclin D subfamily.

In Oryza sativa subsp. japonica (Rice), this protein is Cyclin-D2-1 (CYCD2-1).